An 85-amino-acid polypeptide reads, in one-letter code: UPF0291 protein SEQ_0545 (85 aa).

The segment at 62-85 is disordered; that stretch reads TPEKLRQVQREKGLHGRSLDDPES.

The protein belongs to the UPF0291 family.

It localises to the cytoplasm. The sequence is that of UPF0291 protein SEQ_0545 from Streptococcus equi subsp. equi (strain 4047).